We begin with the raw amino-acid sequence, 329 residues long: GTP 3',8-cyclase (329 aa).

Positions 1 to 229 (MNQIDYLRIS…EGQVRGNGPA (229 aa)) constitute a Radical SAM core domain. Arg-8 lines the GTP pocket. Cys-15 and Cys-19 together coordinate [4Fe-4S] cluster. Tyr-21 provides a ligand contact to S-adenosyl-L-methionine. Cys-22 provides a ligand contact to [4Fe-4S] cluster. A GTP-binding site is contributed by Arg-60. Residue Gly-64 coordinates S-adenosyl-L-methionine. GTP is bound at residue Thr-91. Residue Ser-115 participates in S-adenosyl-L-methionine binding. Residue Lys-155 participates in GTP binding. Met-189 is a binding site for S-adenosyl-L-methionine. Residues Cys-252 and Cys-255 each coordinate [4Fe-4S] cluster. Residue 257–259 (RLR) coordinates GTP. Cys-269 is a binding site for [4Fe-4S] cluster.

The protein belongs to the radical SAM superfamily. MoaA family. As to quaternary structure, monomer and homodimer. Requires [4Fe-4S] cluster as cofactor.

It catalyses the reaction GTP + AH2 + S-adenosyl-L-methionine = (8S)-3',8-cyclo-7,8-dihydroguanosine 5'-triphosphate + 5'-deoxyadenosine + L-methionine + A + H(+). It participates in cofactor biosynthesis; molybdopterin biosynthesis. In terms of biological role, catalyzes the cyclization of GTP to (8S)-3',8-cyclo-7,8-dihydroguanosine 5'-triphosphate. This Microcystis aeruginosa (strain NIES-843 / IAM M-2473) protein is GTP 3',8-cyclase.